The primary structure comprises 28 residues: Dermaseptin-H2 (28 aa).

This sequence belongs to the frog skin active peptide (FSAP) family. Dermaseptin subfamily. In terms of tissue distribution, expressed by the skin glands.

The protein resides in the secreted. In terms of biological role, possesses a potent antimicrobial activity against Gram-positive and Gram-negative bacteria. Probably acts by disturbing membrane functions with its amphipathic structure. The sequence is that of Dermaseptin-H2 from Pithecopus azureus (Orange-legged monkey tree frog).